Here is a 471-residue protein sequence, read N- to C-terminus: Glutamate--tRNA ligase (471 aa).

The 'HIGH' region motif lies at 9 to 19 (PSPTGYLHVGG). C98, C100, C125, and D127 together coordinate Zn(2+). Positions 237-241 (KLSKR) match the 'KMSKS' region motif. An ATP-binding site is contributed by K240.

It belongs to the class-I aminoacyl-tRNA synthetase family. Glutamate--tRNA ligase type 1 subfamily. Monomer. Zn(2+) is required as a cofactor.

The protein resides in the cytoplasm. The catalysed reaction is tRNA(Glu) + L-glutamate + ATP = L-glutamyl-tRNA(Glu) + AMP + diphosphate. In terms of biological role, catalyzes the attachment of glutamate to tRNA(Glu) in a two-step reaction: glutamate is first activated by ATP to form Glu-AMP and then transferred to the acceptor end of tRNA(Glu). This chain is Glutamate--tRNA ligase, found in Yersinia pseudotuberculosis serotype O:1b (strain IP 31758).